Consider the following 114-residue polypeptide: Transmembrane protein 14DP (114 aa).

Helical transmembrane passes span 8 to 28 (LVPL…GGIV), 36 to 56 (APSL…AYQL), 63 to 80 (VWDF…IMGM), and 83 to 103 (YYYG…LMAA).

Belongs to the TMEM14 family.

The protein resides in the membrane. The sequence is that of Transmembrane protein 14DP (TMEM14DP) from Homo sapiens (Human).